Here is a 366-residue protein sequence, read N- to C-terminus: Mitochondrial division protein fszB (366 aa).

GTP contacts are provided by residues 70–74 (GGGGN), 157–159 (GTG), E190, and D238.

It belongs to the FtsZ family.

The protein localises to the mitochondrion. Its function is as follows. Probably involved in mitochondrion division process. Binds to and hydrolyzes GTP. The sequence is that of Mitochondrial division protein fszB (fszB) from Dictyostelium discoideum (Social amoeba).